A 388-amino-acid chain; its full sequence is Flap endonuclease 1 (388 aa).

The interval 1–104 (MGILGLSKLI…GELAKRAERR (104 aa)) is N-domain. Asp-34 is a binding site for Mg(2+). Positions 47 and 70 each coordinate DNA. Asp-86, Glu-158, Glu-160, Asp-179, and Asp-181 together coordinate Mg(2+). Residues 122-253 (EIEKFNRRLV…KRAIELINSY (132 aa)) are I-domain. Glu-158 lines the DNA pocket. Residues Gly-231 and Asp-233 each contribute to the DNA site. Residue Asp-233 participates in Mg(2+) binding. The interaction with PCNA stretch occupies residues 336-344 (TQVRLDSFF). The disordered stretch occupies residues 355-388 (AAAKRKAEEAKKSANNKKAKIGGGGGAGRGRRPK).

The protein belongs to the XPG/RAD2 endonuclease family. FEN1 subfamily. As to quaternary structure, interacts with PCNA. Three molecules of FEN1 bind to one PCNA trimer with each molecule binding to one PCNA monomer. PCNA stimulates the nuclease activity without altering cleavage specificity. Mg(2+) serves as cofactor. In terms of processing, phosphorylated. Phosphorylation upon DNA damage induces relocalization to the nuclear plasma.

The protein localises to the nucleus. Its subcellular location is the nucleolus. It localises to the nucleoplasm. It is found in the mitochondrion. In terms of biological role, structure-specific nuclease with 5'-flap endonuclease and 5'-3' exonuclease activities involved in DNA replication and repair. During DNA replication, cleaves the 5'-overhanging flap structure that is generated by displacement synthesis when DNA polymerase encounters the 5'-end of a downstream Okazaki fragment. It enters the flap from the 5'-end and then tracks to cleave the flap base, leaving a nick for ligation. Also involved in the long patch base excision repair (LP-BER) pathway, by cleaving within the apurinic/apyrimidinic (AP) site-terminated flap. Acts as a genome stabilization factor that prevents flaps from equilibrating into structures that lead to duplications and deletions. Also possesses 5'-3' exonuclease activity on nicked or gapped double-stranded DNA, and exhibits RNase H activity. Also involved in replication and repair of rDNA and in repairing mitochondrial DNA. This is Flap endonuclease 1 from Drosophila willistoni (Fruit fly).